The chain runs to 389 residues: NADH-quinone oxidoreductase subunit D (389 aa).

This sequence belongs to the complex I 49 kDa subunit family. As to quaternary structure, NDH-1 is composed of 14 different subunits. Subunits NuoB, C, D, E, F, and G constitute the peripheral sector of the complex.

Its subcellular location is the cell inner membrane. It catalyses the reaction a quinone + NADH + 5 H(+)(in) = a quinol + NAD(+) + 4 H(+)(out). Functionally, NDH-1 shuttles electrons from NADH, via FMN and iron-sulfur (Fe-S) centers, to quinones in the respiratory chain. The immediate electron acceptor for the enzyme in this species is believed to be ubiquinone. Couples the redox reaction to proton translocation (for every two electrons transferred, four hydrogen ions are translocated across the cytoplasmic membrane), and thus conserves the redox energy in a proton gradient. The sequence is that of NADH-quinone oxidoreductase subunit D from Rickettsia prowazekii (strain Madrid E).